We begin with the raw amino-acid sequence, 452 residues long: MSHNVTPNTSRVELRKTLTLVPVVMMGLAYMQPMTLFDTFGIVSGLTDGHVPTAYAFALIAILFTALSYGKLVRRYPSAGSAYTYAQKSISPTVGFMVGWSSLLDYLFAPMINILLAKIYFEALVPSIPSWMFVVALVAFMTAFNLRSLKSVANFNTVIVVLQVVLIAVILGMVVYGVFEGEGAGTLASTRPFWSGDAHVIPMITGATILCFSFTGFDGISNLSEETKDAERVIPRAIFLTALIGGMIFIFATYFLQLYFPDISRFKDPDASQPEIMLYVAGKAFQVGALIFSTITVLASGMAAHAGVARLMYVMGRDGVFPKSFFGYVHPKWRTPAMNIILVGAIALLAINFDLVMATALINFGALVAFTFVNLSVISQFWIREKRNKTLKDHFQYLFLPMCGALTVGALWVNLEESSMVLGLIWAAIGLIYLACVTKSFRNPVPQYEDVA.

Residues 1-16 (MSHNVTPNTSRVELRK) lie on the Cytoplasmic side of the membrane. The chain crosses the membrane as a helical span at residues 17–37 (TLTLVPVVMMGLAYMQPMTLF). The Periplasmic segment spans residues 38-48 (DTFGIVSGLTD). A helical membrane pass occupies residues 49 to 69 (GHVPTAYAFALIAILFTALSY). The Cytoplasmic segment spans residues 70-95 (GKLVRRYPSAGSAYTYAQKSISPTVG). A helical membrane pass occupies residues 96-116 (FMVGWSSLLDYLFAPMINILL). Residues 117–123 (AKIYFEA) are Periplasmic-facing. Residues 124–144 (LVPSIPSWMFVVALVAFMTAF) traverse the membrane as a helical segment. Over 145–158 (NLRSLKSVANFNTV) the chain is Cytoplasmic. The helical transmembrane segment at 159–179 (IVVLQVVLIAVILGMVVYGVF) threads the bilayer. Topologically, residues 180-199 (EGEGAGTLASTRPFWSGDAH) are periplasmic. Residues 200-220 (VIPMITGATILCFSFTGFDGI) form a helical membrane-spanning segment. The Cytoplasmic segment spans residues 221-237 (SNLSEETKDAERVIPRA). The chain crosses the membrane as a helical span at residues 238-258 (IFLTALIGGMIFIFATYFLQL). Residues 259–283 (YFPDISRFKDPDASQPEIMLYVAGK) lie on the Periplasmic side of the membrane. Residues 284–304 (AFQVGALIFSTITVLASGMAA) traverse the membrane as a helical segment. Residues 305–339 (HAGVARLMYVMGRDGVFPKSFFGYVHPKWRTPAMN) lie on the Cytoplasmic side of the membrane. 2 helical membrane passes run 340–360 (IILV…MATA) and 361–381 (LINF…ISQF). At 382–394 (WIREKRNKTLKDH) the chain is on the cytoplasmic side. The helical transmembrane segment at 395–415 (FQYLFLPMCGALTVGALWVNL) threads the bilayer. Over 416-417 (EE) the chain is Periplasmic. The chain crosses the membrane as a helical span at residues 418–438 (SSMVLGLIWAAIGLIYLACVT). The Cytoplasmic portion of the chain corresponds to 439 to 452 (KSFRNPVPQYEDVA).

The protein belongs to the amino acid-polyamine-organocation (APC) superfamily.

The protein localises to the cell inner membrane. It carries out the reaction putrescine(in) + H(+)(in) = putrescine(out) + H(+)(out). Functionally, putrescine importer. The sequence is that of Low-affinity putrescine importer PlaP (plaP) from Escherichia coli O157:H7.